We begin with the raw amino-acid sequence, 311 residues long: Formyltransferase/hydrolase complex subunit D (311 aa).

This sequence belongs to the FTR family. In terms of assembly, homotetramer. Octaheteromer. Part of the formyltransferase/hydrolase complex fhc; composed of FhcA, FhcB, FhcC and FhcD.

The protein resides in the cytoplasm. It carries out the reaction N-formylmethanofuran + 5,6,7,8-tetrahydromethanopterin + H(+) = N(5)-formyl-5,6,7,8-tetrahydromethanopterin + methanofuran. The protein operates within one-carbon metabolism; formaldehyde degradation; formate from formaldehyde (H(4)MPT route): step 4/5. Its function is as follows. Involved in the transformation of 5-formyl tetrahydromethanopterin (5-formyl-H(4)MPT) to methanofuran (MFR) and formate via the intermediate formylmethanofuran (formyl-MFR). Catalyzes the transfer of a formyl group from 5-formyl-H(4)MPT to MFR to produce tetrahydromethanopterin (H(4)MPT) and formyl-MFR, which is then hydrolyzed to formate and MFR. The polypeptide is Formyltransferase/hydrolase complex subunit D (Methylorubrum extorquens (strain ATCC 14718 / DSM 1338 / JCM 2805 / NCIMB 9133 / AM1) (Methylobacterium extorquens)).